Here is a 551-residue protein sequence, read N- to C-terminus: Medium/long-chain-fatty-acid--CoA/3-oxocholest-4-en-26-oate--CoA ligase (551 aa).

ATP contacts are provided by residues 172–180 (TGGTTGFPK), D417, R432, and K523.

It belongs to the ATP-dependent AMP-binding enzyme family.

The catalysed reaction is a medium-chain fatty acid + ATP + CoA = a medium-chain fatty acyl-CoA + AMP + diphosphate. It carries out the reaction a long-chain fatty acid + ATP + CoA = a long-chain fatty acyl-CoA + AMP + diphosphate. It catalyses the reaction (25S)-3-oxocholest-4-en-26-oate + ATP + CoA = (25S)-3-oxocholest-4-en-26-oyl-CoA + AMP + diphosphate. Its pathway is lipid metabolism; fatty acid biosynthesis. It participates in steroid metabolism; cholesterol metabolism. In terms of biological role, plays an essential role in degradation of the side chains of C-24 branched-chain sterols. Not essential for degradation of straight chain sterols such as cholesterol. Catalyzes the activation of medium/long-chain fatty acids as acyl-coenzyme A (acyl-CoA), which are then transferred to the multifunctional polyketide synthase (PKS) type III for further chain extension. May be involved in the degradation of cholesterol via the degradation of the side chains of C-24 branched-chain sterols. This chain is Medium/long-chain-fatty-acid--CoA/3-oxocholest-4-en-26-oate--CoA ligase, found in Mycolicibacterium smegmatis (strain ATCC 700084 / mc(2)155) (Mycobacterium smegmatis).